The chain runs to 416 residues: Gamma-glutamyl phosphate reductase (416 aa).

It belongs to the gamma-glutamyl phosphate reductase family.

Its subcellular location is the cytoplasm. The enzyme catalyses L-glutamate 5-semialdehyde + phosphate + NADP(+) = L-glutamyl 5-phosphate + NADPH + H(+). It functions in the pathway amino-acid biosynthesis; L-proline biosynthesis; L-glutamate 5-semialdehyde from L-glutamate: step 2/2. Its function is as follows. Catalyzes the NADPH-dependent reduction of L-glutamate 5-phosphate into L-glutamate 5-semialdehyde and phosphate. The product spontaneously undergoes cyclization to form 1-pyrroline-5-carboxylate. The protein is Gamma-glutamyl phosphate reductase of Leptospira borgpetersenii serovar Hardjo-bovis (strain JB197).